A 216-amino-acid polypeptide reads, in one-letter code: MINMTRKLYYEDAYLKEAKGRVLEIRDNAILLDQTIFYPTGGGQPHDRGTINGVEVLDVYKDEEGNVWHVVKEPEKFKVGDEVELKIDWDYRYKLMRIHTGLHLLEHVLNEVLGEGNWQLVGSGMSVEKGRYDIAYPENLNKYKEQIISLFNKYVDEGGEVKIWWEGDRRYTQIRDFEVIPCGGTHVKDIKEIGHIKKLKRSSIGRGKQRLEMWLE.

Positions 99, 103, and 182 each coordinate Zn(2+).

The protein belongs to the class-II aminoacyl-tRNA synthetase family. Editing domain AlaX-M subfamily. In terms of assembly, monomer. The cofactor is Zn(2+).

Its subcellular location is the cytoplasm. Functions in trans to edit the amino acid moiety from mischarged charged Gly-tRNA(Ala) and Ser-tRNA(Ala). This chain is Alanyl-tRNA editing protein AlaX-M (alaXM), found in Pyrococcus horikoshii (strain ATCC 700860 / DSM 12428 / JCM 9974 / NBRC 100139 / OT-3).